Consider the following 85-residue polypeptide: MSEVHKAISAHSSKQHEHIKAFMRLENMRELAIEEAVAKCRNDEPYTTDAINEITEQMNQLAKKGIVPTRRLVSKEMVREYVSRM.

This is an uncharacterized protein from Bacillus subtilis (strain 168).